The following is a 104-amino-acid chain: ATP-dependent Clp protease adapter protein ClpS (104 aa).

Belongs to the ClpS family. Binds to the N-terminal domain of the chaperone ClpA.

In terms of biological role, involved in the modulation of the specificity of the ClpAP-mediated ATP-dependent protein degradation. In Burkholderia thailandensis (strain ATCC 700388 / DSM 13276 / CCUG 48851 / CIP 106301 / E264), this protein is ATP-dependent Clp protease adapter protein ClpS.